Here is a 187-residue protein sequence, read N- to C-terminus: Cytochrome c oxidase assembly protein CtaG (187 aa).

The Cytoplasmic portion of the chain corresponds to 1–9; the sequence is MSKKSNKNL. A helical; Signal-anchor for type II membrane protein transmembrane segment spans residues 10–30; it reads AFSLLGLIISMVLLSFASVPI. The Periplasmic segment spans residues 31-187; that stretch reads YNLFCKVTGY…IASLRGNTKY (157 aa).

This sequence belongs to the COX11/CtaG family.

The protein localises to the cell inner membrane. In terms of biological role, exerts its effect at some terminal stage of cytochrome c oxidase synthesis, probably by being involved in the insertion of the copper B into subunit I. This is Cytochrome c oxidase assembly protein CtaG from Rickettsia felis (strain ATCC VR-1525 / URRWXCal2) (Rickettsia azadi).